The sequence spans 215 residues: UPF0056 membrane protein BU267 (215 aa).

A run of 6 helical transmembrane segments spans residues 14 to 34 (FFIGLCALVNPIGMIPIFTTM), 56 to 76 (LILLISLFFGSNILNIFGISI), 81 to 101 (IAGGILIISIAFSMISGQFIK), 120 to 140 (VVPLAMPLIAGPGAISSTIVW), 150 to 170 (LFLCSLVIFLFSFVCWLCFEA), and 189 to 209 (IMGLLLMSLGIEFISTGIGAI).

It belongs to the UPF0056 (MarC) family.

The protein localises to the cell membrane. The chain is UPF0056 membrane protein BU267 from Buchnera aphidicola subsp. Acyrthosiphon pisum (strain APS) (Acyrthosiphon pisum symbiotic bacterium).